Here is a 199-residue protein sequence, read N- to C-terminus: MEYYAVPIAKLVEEFQKLPGIGHKSAQRLAFHVINLPMEKVQKLSESILEAKQKTRYCSVCSNLTDIDPCPLCSGTSRDKTVICVVQDPRDVVAMERTREFKGLYHVLHGAISPMQGIGPEEIRIKELITRLGSGDVKEVILATNPNVEGEATAMYISKLIKPLGVKATRIAHGIPVGGDLEYADEVTLAKALEGRREI.

The C4-type zinc finger occupies C58 to C73. Residues T81–P176 form the Toprim domain.

This sequence belongs to the RecR family.

In terms of biological role, may play a role in DNA repair. It seems to be involved in an RecBC-independent recombinational process of DNA repair. It may act with RecF and RecO. This chain is Recombination protein RecR, found in Ruminiclostridium cellulolyticum (strain ATCC 35319 / DSM 5812 / JCM 6584 / H10) (Clostridium cellulolyticum).